Here is a 127-residue protein sequence, read N- to C-terminus: S-adenosylmethionine decarboxylase proenzyme (127 aa).

Residue Ser-63 is the Schiff-base intermediate with substrate; via pyruvic acid of the active site. Ser-63 bears the Pyruvic acid (Ser); by autocatalysis mark. The active-site Proton acceptor; for processing activity is the His-68. The active-site Proton donor; for catalytic activity is the Cys-83.

Belongs to the prokaryotic AdoMetDC family. Type 1 subfamily. As to quaternary structure, heterotetramer of two alpha and two beta chains arranged as a dimer of alpha/beta heterodimers. Pyruvate serves as cofactor. Post-translationally, is synthesized initially as an inactive proenzyme. Formation of the active enzyme involves a self-maturation process in which the active site pyruvoyl group is generated from an internal serine residue via an autocatalytic post-translational modification. Two non-identical subunits are generated from the proenzyme in this reaction, and the pyruvate is formed at the N-terminus of the alpha chain, which is derived from the carboxyl end of the proenzyme. The post-translation cleavage follows an unusual pathway, termed non-hydrolytic serinolysis, in which the side chain hydroxyl group of the serine supplies its oxygen atom to form the C-terminus of the beta chain, while the remainder of the serine residue undergoes an oxidative deamination to produce ammonia and the pyruvoyl group blocking the N-terminus of the alpha chain.

The enzyme catalyses S-adenosyl-L-methionine + H(+) = S-adenosyl 3-(methylsulfanyl)propylamine + CO2. It participates in amine and polyamine biosynthesis; S-adenosylmethioninamine biosynthesis; S-adenosylmethioninamine from S-adenosyl-L-methionine: step 1/1. Its function is as follows. Catalyzes the decarboxylation of S-adenosylmethionine to S-adenosylmethioninamine (dcAdoMet), the propylamine donor required for the synthesis of the polyamines spermine and spermidine from the diamine putrescine. In Carboxydothermus hydrogenoformans (strain ATCC BAA-161 / DSM 6008 / Z-2901), this protein is S-adenosylmethionine decarboxylase proenzyme.